Here is a 412-residue protein sequence, read N- to C-terminus: NF-kappa-B essential modulator (412 aa).

Residues 1-48 (MSRHLWKNQLSEMVQPSGGPAEDQDMLGEESSLGKPAMLHLPSEQGTP) are disordered. The segment at 1–197 (MSRHLWKNQL…REVLQQQHSV (197 aa)) is required for interaction with and ubiquitination by MARCHF2. Phosphoserine; by IKKB is present on residues Ser-31 and Ser-43. The interval 44-111 (EQGTPETLQR…KLVERLSLEK (68 aa)) is interaction with CHUK/IKBKB. Residues 49–343 (ETLQRCLEEN…NKLKVGCHES (295 aa)) adopt a coiled-coil conformation. At Ser-68 the chain carries Phosphoserine. Ser-85 is modified (phosphoserine; by ATM). Glycyl lysine isopeptide (Lys-Gly) (interchain with G-Cter in ubiquitin) cross-links involve residues Lys-111, Lys-139, Lys-143, Lys-226, and Lys-246. An interaction with TANK region spans residues 150 to 250 (LGELQESQSR…YDSHIKSSKG (101 aa)). Residues 242–343 (DSHIKSSKGM…NKLKVGCHES (102 aa)) are ubiquitin-binding (UBAN). The interval 246–358 (KSSKGMQLED…MRKRHVETSQ (113 aa)) is self-association. Positions 249 to 412 (KGMQLEDLRQ…LQIHVMECIE (164 aa)) are required for interaction with TNFAIP3. A Glycyl lysine isopeptide (Lys-Gly) (interchain with G-Cter in SUMO); alternate cross-link involves residue Lys-270. Lys-270 participates in a covalent cross-link: Glycyl lysine isopeptide (Lys-Gly) (interchain with G-Cter in ubiquitin); alternate. Residues Lys-276, Lys-278, Lys-285, and Lys-295 each participate in a glycyl lysine isopeptide (Lys-Gly) (interchain with G-Cter in ubiquitin) cross-link. Residue Lys-302 forms a Glycyl lysine isopeptide (Lys-Gly) (interchain with G-Cter in SUMO); alternate linkage. Lys-302 participates in a covalent cross-link: Glycyl lysine isopeptide (Lys-Gly) (interchain with G-Cter in ubiquitin); alternate. Residues Lys-314 and Lys-319 each participate in a glycyl lysine isopeptide (Lys-Gly) (interchain with G-Cter in ubiquitin) cross-link. The tract at residues 315–336 (LVERKELLQEQLEQLQREFNKL) is leucine-zipper. Ser-369 carries the phosphoserine; by IKKB modification. Residues 375–412 (SNQRRSPPEEPPDFCCPKCQYQAPDMDTLQIHVMECIE) are interaction with CYLD. Ser-380 is modified (phosphoserine). The CCHC NOA-type zinc-finger motif lies at 382-412 (PEEPPDFCCPKCQYQAPDMDTLQIHVMECIE). Position 390 (Cys-390) interacts with Zn(2+). Residue Lys-392 forms a Glycyl lysine isopeptide (Lys-Gly) (interchain with G-Cter in ubiquitin) linkage. Cys-393, His-406, and Cys-410 together coordinate Zn(2+).

In terms of assembly, homodimer; disulfide-linked. Component of the I-kappa-B-kinase (IKK) core complex consisting of CHUK, IKBKB and IKBKG; probably four alpha/CHUK-beta/IKBKB dimers are associated with four gamma/IKBKG subunits. The IKK core complex seems to associate with regulatory or adapter proteins to form a IKK-signalosome holo-complex. The IKK complex associates with TERF2IP/RAP1, leading to promote IKK-mediated phosphorylation of RELA/p65. Part of a complex composed of NCOA2, NCOA3, CHUK/IKKA, IKBKB, IKBKG and CREBBP. Interacts with COPS3, CYLD, NALP2, TRPC4AP and PIDD1. Interacts with ATM; the complex is exported from the nucleus. Interacts with TRAF6. Interacts with IKBKE. Interacts with TANK; the interaction is enhanced by IKBKE and TBK1. Part of a ternary complex consisting of TANK, IKBKB and IKBKG. Interacts with ZFAND5. Interacts with RIPK2. Interacts with TNIP1 and TNFAIP3; TNIP1 facilitates the TNFAIP3-mediated de-ubiquitination of IKBKG. Interacts with TNFAIP3; the interaction is induced by TNF stimulation and by polyubiquitin. Binds (via UBAN region) polyubiquitin; binds both 'Lys-63'-linked and linear polyubiquitin, with higher affinity for linear ubiquitin. Interacts with NLRP10. Interacts with TANK; this interaction increases in response to DNA damage. Interacts with USP10; this interaction increases in response to DNA damage. Interacts with ZC3H12A; this interaction increases in response to DNA damage. Interacts with IFIT5; the interaction synergizes the recruitment of IKK to MAP3K7 and enhances IKK phosphorylation. Interacts with TRIM29; this interaction induces IKBKG/NEMO ubiquitination and proteolytic degradation. Interacts with TRIM13; this interaction leads to IKBKG/NEMO ubiquitination. Interacts with ARFIP2. Interacts with RIPK1. Interacts with (ubiquitinated) BCL10; interaction with polyubiquitinated BCL10 via both 'Lys-63'-linked and linear ubiquitin is required for TCR-induced NF-kappa-B activation. Interacts with MARCHF2; during the late stages of macrophage viral and bacterial infection; the interaction leads to ubiquitination and degradation of IKBKG/NEMO. In terms of processing, phosphorylation at Ser-68 attenuates aminoterminal homodimerization. Polyubiquitinated on Lys-278 via 'Lys-63'-linked ubiquitin; the ubiquitination is mediated downstream of NOD2 and RIPK2 and probably plays a role in signaling by facilitating interactions with ubiquitin domain-containing proteins and activates the NF-kappa-B pathway. Polyubiquitinated on Lys-278 and Lys-302 through 'Lys-63'-linked ubiquitin; the ubiquitination is mediated by BCL10, MALT1 and TRAF6 and probably plays a role in signaling by facilitating interactions with ubiquitin domain-containing proteins and activates the NF-kappa-B pathway. Monoubiquitinated on Lys-270 and Lys-302; promotes nuclear export. Polyubiquitinated through 'Lys-27' by TRIM23; involved in antiviral innate and inflammatory responses. Linear polyubiquitinated on Lys-111, Lys-143, Lys-226, Lys-246, Lys-270, Lys-278, Lys-285, Lys-295, Lys-302 and Lys-319; the head-to-tail polyubiquitination is mediated by the LUBAC complex and plays a key role in NF-kappa-B activation. Deubiquitinated by USP10 in a TANK-dependent and -independent manner, leading to the negative regulation of NF-kappa-B signaling upon DNA damage. Ubiquitinated at Lys-319 by MARCHF2 following bacterial and viral infection which leads to its degradation. Polyubiquitinated via 'Lys-29'-linked ubiquitin; leading to lysosomal degradation. Post-translationally, sumoylated on Lys-270 and Lys-302 with SUMO1; the modification results in phosphorylation of Ser-85 by ATM leading to a replacement of the sumoylation by mono-ubiquitination on these residues. In terms of processing, neddylated by TRIM40, resulting in stabilization of NFKBIA and down-regulation of NF-kappa-B activity.

The protein resides in the cytoplasm. It localises to the nucleus. Regulatory subunit of the IKK core complex which phosphorylates inhibitors of NF-kappa-B thus leading to the dissociation of the inhibitor/NF-kappa-B complex and ultimately the degradation of the inhibitor. Its binding to scaffolding polyubiquitin plays a key role in IKK activation by multiple signaling receptor pathways. Can recognize and bind both 'Lys-63'-linked and linear polyubiquitin upon cell stimulation, with a much highr affinity for linear polyubiquitin. Could be implicated in NF-kappa-B-mediated protection from cytokine toxicity. Essential for viral activation of IRF3. Involved in TLR3- and IFIH1-mediated antiviral innate response; this function requires 'Lys-27'-linked polyubiquitination. The chain is NF-kappa-B essential modulator (Ikbkg) from Rattus norvegicus (Rat).